We begin with the raw amino-acid sequence, 512 residues long: NAD(P)H-quinone oxidoreductase chain 4, chloroplastic (512 aa).

Helical transmembrane passes span 4 to 24, 34 to 54, 87 to 107, 111 to 131, 134 to 154, 167 to 187, 210 to 230, 241 to 261, 273 to 293, 312 to 332, 333 to 353, 373 to 395, 416 to 436, and 462 to 482; these read LPWL…IPFI, WYAL…FGYH, MPLV…AWPV, AKLF…VFVS, LLLF…LLLV, FILY…TMAF, ILLY…FPLH, HYST…YALI, LIFA…AALT, MGFV…GAVL, QMIS…TTYD, TFAM…GFVA, IITF…LSML, and IFVI…PKMA.

It belongs to the complex I subunit 4 family.

Its subcellular location is the plastid. It localises to the chloroplast thylakoid membrane. The catalysed reaction is a plastoquinone + NADH + (n+1) H(+)(in) = a plastoquinol + NAD(+) + n H(+)(out). The enzyme catalyses a plastoquinone + NADPH + (n+1) H(+)(in) = a plastoquinol + NADP(+) + n H(+)(out). This is NAD(P)H-quinone oxidoreductase chain 4, chloroplastic from Chlorokybus atmophyticus (Soil alga).